The chain runs to 303 residues: N-acetylmuramic acid 6-phosphate etherase (303 aa).

The SIS domain maps to Ile-61–Lys-224. Residue Glu-89 is the Proton donor of the active site. The active site involves Glu-120.

This sequence belongs to the GCKR-like family. MurNAc-6-P etherase subfamily. In terms of assembly, homodimer.

The catalysed reaction is N-acetyl-D-muramate 6-phosphate + H2O = N-acetyl-D-glucosamine 6-phosphate + (R)-lactate. Its pathway is amino-sugar metabolism; 1,6-anhydro-N-acetylmuramate degradation. It participates in amino-sugar metabolism; N-acetylmuramate degradation. The protein operates within cell wall biogenesis; peptidoglycan recycling. Its function is as follows. Specifically catalyzes the cleavage of the D-lactyl ether substituent of MurNAc 6-phosphate, producing GlcNAc 6-phosphate and D-lactate. Together with AnmK, is also required for the utilization of anhydro-N-acetylmuramic acid (anhMurNAc) either imported from the medium or derived from its own cell wall murein, and thus plays a role in cell wall recycling. The polypeptide is N-acetylmuramic acid 6-phosphate etherase (murQ) (Haemophilus influenzae (strain ATCC 51907 / DSM 11121 / KW20 / Rd)).